We begin with the raw amino-acid sequence, 399 residues long: Serine/threonine transporter SstT (399 aa).

9 consecutive transmembrane segments (helical) span residues 8-28, 37-57, 77-97, 134-154, 178-198, 212-232, 284-304, 312-332, and 348-370; these read LSLV…AFLF, IFGE…VFVL, ILFL…IADL, PVVA…IILG, VIHL…AVTF, LLLV…PIMV, VIIP…ITVL, LGIS…SISA, and VACS…GMVI.

Belongs to the dicarboxylate/amino acid:cation symporter (DAACS) (TC 2.A.23) family.

It localises to the cell inner membrane. The catalysed reaction is L-serine(in) + Na(+)(in) = L-serine(out) + Na(+)(out). It catalyses the reaction L-threonine(in) + Na(+)(in) = L-threonine(out) + Na(+)(out). In terms of biological role, involved in the import of serine and threonine into the cell, with the concomitant import of sodium (symport system). This is Serine/threonine transporter SstT from Acinetobacter baylyi (strain ATCC 33305 / BD413 / ADP1).